Here is a 182-residue protein sequence, read N- to C-terminus: UPF0397 protein BcerKBAB4_2500 (182 aa).

5 helical membrane-spanning segments follow: residues 9-29, 40-60, 71-91, 114-134, and 142-162; these read VVAIGIGAALYGVLGLWGFSI, AILTVFGALFGPVAGLLIGLI, WGIWWGWVISSGIIGLAMGLI, IAGLIGIVIAIIFAGSFDIIV, and IVIQVLGATIADVIVFLVLGL.

Belongs to the UPF0397 family.

It localises to the cell membrane. This chain is UPF0397 protein BcerKBAB4_2500, found in Bacillus mycoides (strain KBAB4) (Bacillus weihenstephanensis).